A 497-amino-acid chain; its full sequence is Lysine--tRNA ligase (497 aa).

Mg(2+) contacts are provided by Glu409 and Glu416.

The protein belongs to the class-II aminoacyl-tRNA synthetase family. In terms of assembly, homodimer. The cofactor is Mg(2+).

It is found in the cytoplasm. It carries out the reaction tRNA(Lys) + L-lysine + ATP = L-lysyl-tRNA(Lys) + AMP + diphosphate. The chain is Lysine--tRNA ligase from Streptococcus pyogenes serotype M3 (strain ATCC BAA-595 / MGAS315).